A 109-amino-acid polypeptide reads, in one-letter code: Cell division protein ZapA (109 aa).

Residues 21–97 (PDQRDALNQA…QTIEQALLDQ (77 aa)) adopt a coiled-coil conformation.

The protein belongs to the ZapA family. Type 1 subfamily. Homodimer. Interacts with FtsZ.

The protein localises to the cytoplasm. Functionally, activator of cell division through the inhibition of FtsZ GTPase activity, therefore promoting FtsZ assembly into bundles of protofilaments necessary for the formation of the division Z ring. It is recruited early at mid-cell but it is not essential for cell division. The protein is Cell division protein ZapA of Salmonella agona (strain SL483).